The following is a 321-amino-acid chain: Lipoyl synthase (321 aa).

[4Fe-4S] cluster-binding residues include Cys68, Cys73, Cys79, Cys94, Cys98, Cys101, and Ser308. One can recognise a Radical SAM core domain in the interval 80–297 (FNHGTATFMI…KVLADELGFT (218 aa)).

This sequence belongs to the radical SAM superfamily. Lipoyl synthase family. [4Fe-4S] cluster serves as cofactor.

Its subcellular location is the cytoplasm. The enzyme catalyses [[Fe-S] cluster scaffold protein carrying a second [4Fe-4S](2+) cluster] + N(6)-octanoyl-L-lysyl-[protein] + 2 oxidized [2Fe-2S]-[ferredoxin] + 2 S-adenosyl-L-methionine + 4 H(+) = [[Fe-S] cluster scaffold protein] + N(6)-[(R)-dihydrolipoyl]-L-lysyl-[protein] + 4 Fe(3+) + 2 hydrogen sulfide + 2 5'-deoxyadenosine + 2 L-methionine + 2 reduced [2Fe-2S]-[ferredoxin]. It functions in the pathway protein modification; protein lipoylation via endogenous pathway; protein N(6)-(lipoyl)lysine from octanoyl-[acyl-carrier-protein]: step 2/2. In terms of biological role, catalyzes the radical-mediated insertion of two sulfur atoms into the C-6 and C-8 positions of the octanoyl moiety bound to the lipoyl domains of lipoate-dependent enzymes, thereby converting the octanoylated domains into lipoylated derivatives. The polypeptide is Lipoyl synthase (Shewanella sp. (strain MR-7)).